We begin with the raw amino-acid sequence, 156 residues long: ATP synthase subunit b (156 aa).

A helical transmembrane segment spans residues 5–25; the sequence is LTLIVQMLVFAAFVLFTMKLV.

Belongs to the ATPase B chain family. As to quaternary structure, F-type ATPases have 2 components, F(1) - the catalytic core - and F(0) - the membrane proton channel. F(1) has five subunits: alpha(3), beta(3), gamma(1), delta(1), epsilon(1). F(0) has three main subunits: a(1), b(2) and c(10-14). The alpha and beta chains form an alternating ring which encloses part of the gamma chain. F(1) is attached to F(0) by a central stalk formed by the gamma and epsilon chains, while a peripheral stalk is formed by the delta and b chains.

The protein resides in the cell inner membrane. F(1)F(0) ATP synthase produces ATP from ADP in the presence of a proton or sodium gradient. F-type ATPases consist of two structural domains, F(1) containing the extramembraneous catalytic core and F(0) containing the membrane proton channel, linked together by a central stalk and a peripheral stalk. During catalysis, ATP synthesis in the catalytic domain of F(1) is coupled via a rotary mechanism of the central stalk subunits to proton translocation. In terms of biological role, component of the F(0) channel, it forms part of the peripheral stalk, linking F(1) to F(0). In Legionella pneumophila (strain Paris), this protein is ATP synthase subunit b.